A 303-amino-acid chain; its full sequence is Paired immunoglobulin-like type 2 receptor alpha (303 aa).

The first 19 residues, 1–19, serve as a signal peptide directing secretion; the sequence is MGRPLLLPLLPLLLPPAFL. Over 20–197 the chain is Extracellular; that stretch reads QPSGSTGSGP…DSWHISLETA (178 aa). The Ig-like V-type domain occupies 32–150; sequence LYGVTQPKHL…SIEGTKLSIT (119 aa). A glycan (N-linked (GlcNAc...) asparagine) is linked at asparagine 100. Residues 198 to 218 traverse the membrane as a helical segment; that stretch reads VGVAVAVTVLGIMILGLICLL. Over 219 to 303 the chain is Cytoplasmic; the sequence is RWRRRKGQQR…NETLYSVLKA (85 aa). Positions 226 to 296 are disordered; the sequence is QQRTKATTPA…RPLKSPQNET (71 aa). Short sequence motifs (ITIM motif) lie at residues 267–272 and 296–301; these read IVYASL and TLYSVL.

Monomer. Interacts with PTPN6/SHP-1 and PTPN11/SHP-2 upon tyrosine phosphorylation. As to quaternary structure, (Microbial infection) Interacts with herpes simplex virus 1 glycoprotein B. In terms of processing, according to PubMed:10660620, N- and O-glycosylated. According to PubMed:10903717, only N-glycosylated. Post-translationally, phosphorylated on tyrosine residues. As to expression, predominantly detected in hemopoietic tissues and is expressed by monocytes, macrophages, and granulocytes, but not by lymphocytes. Also strongly expressed by dendritic cells (DC); preferentially by CD14+/CD1a- DC derived from CD34+ progenitors. Also expressed by CD11c+ blood and tonsil DC, but not by CD11c- DC precursors.

The protein localises to the cell membrane. It localises to the secreted. Paired receptors consist of highly related activating and inhibitory receptors and are widely involved in the regulation of the immune system. PILRA is thought to act as a cellular signaling inhibitory receptor by recruiting cytoplasmic phosphatases like PTPN6/SHP-1 and PTPN11/SHP-2 via their SH2 domains that block signal transduction through dephosphorylation of signaling molecules. Receptor for PIANP. In terms of biological role, (Microbial infection) Acts as an entry co-receptor for herpes simplex virus 1. The polypeptide is Paired immunoglobulin-like type 2 receptor alpha (PILRA) (Homo sapiens (Human)).